The following is a 490-amino-acid chain: Hexokinase (490 aa).

The Hexokinase domain maps to 21-466 (QNLLEHIKHF…SGVGAALIAA (446 aa)). Positions 75–209 (DGKETGTFLA…GLPIKVAALI (135 aa)) are hexokinase small subdomain. Positions 210-455 (NDTTGTLIAS…DKVTIHAAED (246 aa)) are hexokinase large subdomain.

This sequence belongs to the hexokinase family. In terms of assembly, monomer.

The catalysed reaction is a D-hexose + ATP = a D-hexose 6-phosphate + ADP + H(+). It catalyses the reaction D-fructose + ATP = D-fructose 6-phosphate + ADP + H(+). The enzyme catalyses D-glucose + ATP = D-glucose 6-phosphate + ADP + H(+). It functions in the pathway carbohydrate metabolism; hexose metabolism. Its pathway is carbohydrate degradation; glycolysis; D-glyceraldehyde 3-phosphate and glycerone phosphate from D-glucose: step 1/4. Catalyzes the phosphorylation of hexose, such as D-glucose and D-fructose, to hexose 6-phosphate (D-glucose 6-phosphate and D-fructose 6-phosphate, respectively). Mediates the initial step of glycolysis by catalyzing phosphorylation of D-glucose to D-glucose 6-phosphate. In Emericella nidulans (strain FGSC A4 / ATCC 38163 / CBS 112.46 / NRRL 194 / M139) (Aspergillus nidulans), this protein is Hexokinase (hxkA).